The sequence spans 401 residues: Argininosuccinate synthase (401 aa).

Residue 9 to 17 (AYSGGLDTS) participates in ATP binding. Tyr-86 is an L-citrulline binding site. Gly-116 is a binding site for ATP. Residues Thr-118, Asn-122, and Asp-123 each contribute to the L-aspartate site. An L-citrulline-binding site is contributed by Asn-122. 5 residues coordinate L-citrulline: Arg-126, Ser-174, Ser-183, Glu-259, and Tyr-271.

It belongs to the argininosuccinate synthase family. Type 1 subfamily. As to quaternary structure, homotetramer.

It is found in the cytoplasm. The catalysed reaction is L-citrulline + L-aspartate + ATP = 2-(N(omega)-L-arginino)succinate + AMP + diphosphate + H(+). It functions in the pathway amino-acid biosynthesis; L-arginine biosynthesis; L-arginine from L-ornithine and carbamoyl phosphate: step 2/3. The sequence is that of Argininosuccinate synthase from Bacillus thuringiensis subsp. konkukian (strain 97-27).